The following is a 513-amino-acid chain: MKLAYWMYAGPAHIGTLRVASSFKNVHAIMHAPLGDDYFNVMRSMLERERDFTPVTASIVDRHVLARGSQEKVVDNITKKDKQEHPDLIVLTPTCTSSILQEDLQNFVNRASMSSDSDVILADVNHYRVNELQAADRTLEQVVRYYLEKAHRQEKLNLSLTDKPSANIIGIFTLGFHNQHDCRELKRLLQDLGIMINQIIPEGGFVENLHELPKAWFNLVPYREVGLMTALYLEKEFGMPYISTTPMGIVDIANCIRQIQKQVNIWSPILLGKKFDFEPYIDEQTRFISQAAWFSRSIDCQNLTGKKAVVFGDATHAASITKILACEMGIRVSCTGTYCKHDEEWFREQVQNFCDEILITDDHTEVGDMIARIEPSAIFGTQMERHIGKRLDIPCGVISSPVHIQNFPLGYRPFLGYEGTNQIADLVYNSFTLGMEDHLLEIFGGHDTKEVITKSLSTDTDLTWNSESQLELNKIPGFVRGKIKRNTEKFARQNNITKITVEVMYAAKEDLSA.

Asp36 contributes to the [4Fe-4S] cluster binding site. Asp299 (proton donor) is an active-site residue. Substrate is bound at residue 434 to 435 (GM).

The protein belongs to the ChlB/BchB/BchZ family. As to quaternary structure, protochlorophyllide reductase is composed of three subunits; ChlL, ChlN and ChlB. Forms a heterotetramer of two ChlB and two ChlN subunits. [4Fe-4S] cluster is required as a cofactor.

Its subcellular location is the plastid. It is found in the chloroplast. It carries out the reaction chlorophyllide a + oxidized 2[4Fe-4S]-[ferredoxin] + 2 ADP + 2 phosphate = protochlorophyllide a + reduced 2[4Fe-4S]-[ferredoxin] + 2 ATP + 2 H2O. It functions in the pathway porphyrin-containing compound metabolism; chlorophyll biosynthesis (light-independent). Component of the dark-operative protochlorophyllide reductase (DPOR) that uses Mg-ATP and reduced ferredoxin to reduce ring D of protochlorophyllide (Pchlide) to form chlorophyllide a (Chlide). This reaction is light-independent. The NB-protein (ChlN-ChlB) is the catalytic component of the complex. The polypeptide is Light-independent protochlorophyllide reductase subunit B (Marchantia polymorpha (Common liverwort)).